The primary structure comprises 373 residues: tRNA-specific 2-thiouridylase MnmA (373 aa).

Residues 12–19 and Met38 contribute to the ATP site; that span reads GMSGGVDS. The segment at 98–100 is interaction with target base in tRNA; sequence NPD. The Nucleophile role is filled by Cys103. Cys103 and Cys200 are joined by a disulfide. Gly127 lines the ATP pocket. The segment at 150 to 152 is interaction with tRNA; it reads KDQ. The active-site Cysteine persulfide intermediate is Cys200. The segment at 312–313 is interaction with tRNA; that stretch reads RY.

This sequence belongs to the MnmA/TRMU family.

Its subcellular location is the cytoplasm. The enzyme catalyses S-sulfanyl-L-cysteinyl-[protein] + uridine(34) in tRNA + AH2 + ATP = 2-thiouridine(34) in tRNA + L-cysteinyl-[protein] + A + AMP + diphosphate + H(+). In terms of biological role, catalyzes the 2-thiolation of uridine at the wobble position (U34) of tRNA, leading to the formation of s(2)U34. The sequence is that of tRNA-specific 2-thiouridylase MnmA from Streptococcus mutans serotype c (strain ATCC 700610 / UA159).